The following is a 140-amino-acid chain: Nucleoside diphosphate kinase (140 aa).

Lysine 9, phenylalanine 57, arginine 85, threonine 91, arginine 102, and asparagine 112 together coordinate ATP. Histidine 115 (pros-phosphohistidine intermediate) is an active-site residue.

The protein belongs to the NDK family. Homotetramer. The cofactor is Mg(2+).

The protein localises to the cytoplasm. It catalyses the reaction a 2'-deoxyribonucleoside 5'-diphosphate + ATP = a 2'-deoxyribonucleoside 5'-triphosphate + ADP. It carries out the reaction a ribonucleoside 5'-diphosphate + ATP = a ribonucleoside 5'-triphosphate + ADP. Its function is as follows. Major role in the synthesis of nucleoside triphosphates other than ATP. The ATP gamma phosphate is transferred to the NDP beta phosphate via a ping-pong mechanism, using a phosphorylated active-site intermediate. This is Nucleoside diphosphate kinase from Chlorobium luteolum (strain DSM 273 / BCRC 81028 / 2530) (Pelodictyon luteolum).